The chain runs to 394 residues: Multidrug resistance protein D (394 aa).

The Cytoplasmic segment spans residues 1 to 8; sequence MKRQRNVN. A helical membrane pass occupies residues 9–29; it reads LLLMLVLLVAVGQMAQTIYIP. Residues 30–46 are Periplasmic-facing; it reads AIADMARDLNVREGAVQ. The chain crosses the membrane as a helical span at residues 47-67; that stretch reads SVMGAYLLTYGVSQLFYGPIS. Residues 68-73 are Cytoplasmic-facing; it reads DRVGRR. Residues 74–94 traverse the membrane as a helical segment; that stretch reads PVILVGMSIFMLATLVAVTTS. S95 is a topological domain (periplasmic). Residues 96-116 form a helical membrane-spanning segment; it reads LTVLIAASAMQGMGTGVGGVM. Residues 117 to 134 are Cytoplasmic-facing; that stretch reads ARTLPRDLYERTQLRHAN. A helical membrane pass occupies residues 135-155; that stretch reads SLLNMGILVSPLLAPLIGGLL. Residues 156-162 lie on the Periplasmic side of the membrane; it reads DTMWNWR. Residues 163–183 traverse the membrane as a helical segment; sequence ACYLFLLVLCAGVTFSMARWM. Over 184 to 212 the chain is Cytoplasmic; the sequence is PETRPVDAPRTRLLTSYKTLFGNSGFNCY. Residues 213–233 form a helical membrane-spanning segment; it reads LLMLIGGLAGIAAFEACSGVL. The Periplasmic portion of the chain corresponds to 234 to 242; the sequence is MGAVLGLSS. Residues 243–263 traverse the membrane as a helical segment; it reads MTVSILFILPIPAAFFGAWFA. Topologically, residues 264-276 are cytoplasmic; that stretch reads GRPNKRFSTLMWQ. The helical transmembrane segment at 277–297 threads the bilayer; it reads SVICCLLAGLLMWIPDWFGVM. Residue N298 is a topological domain, periplasmic. A helical membrane pass occupies residues 299 to 319; that stretch reads VWTLLVPAALFFFGAGMLFPL. Over 320–329 the chain is Cytoplasmic; it reads ATSGAMEPFP. The helical transmembrane segment at 330-350 threads the bilayer; sequence FLAGTAGALVGGLQNIGSGVL. Topologically, residues 351 to 364 are periplasmic; it reads ASLSAMLPQTGQGS. Residues 365–385 form a helical membrane-spanning segment; the sequence is LGLLMTLMGLLIVLCWLPLAT. Residues 386 to 394 lie on the Cytoplasmic side of the membrane; sequence RMSHQGQPV.

This sequence belongs to the major facilitator superfamily.

It localises to the cell inner membrane. Its function is as follows. Multidrug resistance pump that participates in a low energy shock adaptive response. The polypeptide is Multidrug resistance protein D (emrD) (Escherichia coli (strain K12)).